Consider the following 322-residue polypeptide: Probable 2-oxoglutarate-dependent dioxygenase AOP1 (322 aa).

One can recognise a Fe2OG dioxygenase domain in the interval 165-271 (TYYLTRLMKY…RYSTGLFSIP (107 aa)). His195, Asp197, and His252 together coordinate Fe cation. A 2-oxoglutarate-binding site is contributed by Arg262.

The protein belongs to the iron/ascorbate-dependent oxidoreductase family. It depends on Fe(2+) as a cofactor.

Functionally, probable 2-oxoglutarate-dependent dioxygenase that may be involved in glucosinolates biosynthesis. May play a role in the production of aliphatic glucosinolates. In Arabidopsis thaliana (Mouse-ear cress), this protein is Probable 2-oxoglutarate-dependent dioxygenase AOP1 (AOP1).